We begin with the raw amino-acid sequence, 540 residues long: CWF19-like protein 1 (540 aa).

A disordered region spans residues 265-326 (ENPYRKSDKD…AKQPRKHPQP (62 aa)). The segment covering 267–277 (PYRKSDKDTPK) has biased composition (basic and acidic residues).

It belongs to the CWF19 family.

This is CWF19-like protein 1 (cwf19l1) from Xenopus laevis (African clawed frog).